A 465-amino-acid polypeptide reads, in one-letter code: tRNA-2-methylthio-N(6)-dimethylallyladenosine synthase (465 aa).

In terms of domain architecture, MTTase N-terminal spans 5-125 (RKLHIKSFGC…LPELLEKARR (121 aa)). The [4Fe-4S] cluster site is built by Cys-14, Cys-50, Cys-88, Cys-166, Cys-170, and Cys-173. The Radical SAM core domain maps to 152–382 (RARGVSAFVT…QLQGLIDSQQ (231 aa)). The TRAM domain maps to 387–449 (RASIGTTVDV…RYSLIGELVK (63 aa)).

It belongs to the methylthiotransferase family. MiaB subfamily. In terms of assembly, monomer. Requires [4Fe-4S] cluster as cofactor.

The protein resides in the cytoplasm. It catalyses the reaction N(6)-dimethylallyladenosine(37) in tRNA + (sulfur carrier)-SH + AH2 + 2 S-adenosyl-L-methionine = 2-methylsulfanyl-N(6)-dimethylallyladenosine(37) in tRNA + (sulfur carrier)-H + 5'-deoxyadenosine + L-methionine + A + S-adenosyl-L-homocysteine + 2 H(+). Its function is as follows. Catalyzes the methylthiolation of N6-(dimethylallyl)adenosine (i(6)A), leading to the formation of 2-methylthio-N6-(dimethylallyl)adenosine (ms(2)i(6)A) at position 37 in tRNAs that read codons beginning with uridine. The polypeptide is tRNA-2-methylthio-N(6)-dimethylallyladenosine synthase (Rhodopseudomonas palustris (strain BisA53)).